Here is a 112-residue protein sequence, read N- to C-terminus: Protein Churchill (112 aa).

Zn(2+) is bound by residues Cys2, Cys5, Cys30, Cys33, His59, Cys61, Cys64, His66, His71, Cys88, and Cys91.

This sequence belongs to the Churchill family.

Transcriptional activator that mediates FGF signaling during neural development. Plays a role in the regulation of cell movement. Does not bind DNA by itself. The chain is Protein Churchill (CHURC1) from Bos taurus (Bovine).